The sequence spans 512 residues: Spermatocyte protein spe-8 (512 aa).

Positions methionine 1–serine 85 are disordered. Residues threonine 15–alanine 41 are compositionally biased toward basic and acidic residues. Over residues glutamate 68–proline 78 the composition is skewed to pro residues. Residues phenylalanine 114 to leucine 205 enclose the SH2 domain. A Protein kinase domain is found at valine 217 to glutamate 485. ATP contacts are provided by residues leucine 223–valine 231 and lysine 250. The active-site Proton acceptor is the aspartate 344.

This sequence belongs to the protein kinase superfamily. Tyr protein kinase family. Fes/fps subfamily. As to expression, expression is restricted to male germline.

It is found in the cell membrane. The protein resides in the cytoplasm. The catalysed reaction is L-tyrosyl-[protein] + ATP = O-phospho-L-tyrosyl-[protein] + ADP + H(+). Functionally, probable non-receptor tyrosine-protein kinase which plays a role in spermatid activation (spermiogenesis) in hermaphrodites. This is Spermatocyte protein spe-8 from Caenorhabditis elegans.